Here is a 294-residue protein sequence, read N- to C-terminus: MAIPTETQHQEKEASDASAAAAQKRWTLSDFDIGKPLGRGKFGHVYLAREKRSNHVVALKVLFKSQLQQSQVEHQLRREVEIQSHLRHPNILRLYGYFYDQKRVYLILEYAARGELYKDLQKCKYFSERRAATYVASLARALIYCHGKHVIHRDIKPENLLIGAQGELKIADFGWSVHTFNRRRTMCGTLDYLPPEMVESVEHDASVDIWSLGILCYEFLYGVPPFEAMEHSDTYRRIVQVDLKFPPKPIISASAKDLISQMLVKESSQRLPLHKLLEHPWIVQNADPSGIYRV.

The region spanning 31–282 (FDIGKPLGRG…LHKLLEHPWI (252 aa)) is the Protein kinase domain. ATP is bound by residues 37 to 45 (LGRGKFGHV) and Lys60. Asp154 functions as the Proton acceptor in the catalytic mechanism. Ser176 bears the Phosphoserine mark. At Thr185 the chain carries Phosphothreonine.

The protein belongs to the protein kinase superfamily. Ser/Thr protein kinase family. Aurora subfamily. As to quaternary structure, interacts with TPX2. In terms of processing, phosphorylation at Thr-185 may regulate activity and degradation of AUR1 in a cell cycle dependent manner. In terms of tissue distribution, abundant in roots, flowers and flower buds, low or absent in expanded leaves, stems and siliques.

Its subcellular location is the nucleus membrane. It localises to the cytoplasm. The protein resides in the cytoskeleton. The protein localises to the spindle. It is found in the spindle pole. Its subcellular location is the phragmoplast. It catalyses the reaction L-seryl-[protein] + ATP = O-phospho-L-seryl-[protein] + ADP + H(+). The catalysed reaction is L-threonyl-[protein] + ATP = O-phospho-L-threonyl-[protein] + ADP + H(+). Functionally, phosphorylates specifically 'Ser-10' of histone H3 in vitro and colocalizes with phosphorylated histone H3 during mitosis. Associates with cytoskeletal structures that are necessary for cytokinesis and with the microtubule spindle. Also colocalizes with gamma-tubulin and function in microtubule organizing centers (MTOCs). In contrast with the mammalian B-type Aurora, AUR1 has no kinase activity toward 'Ser-28' of histone H3. This is Serine/threonine-protein kinase Aurora-1 (AUR1) from Arabidopsis thaliana (Mouse-ear cress).